The following is a 326-amino-acid chain: tRNA dimethylallyltransferase (326 aa).

18 to 25 serves as a coordination point for ATP; the sequence is GPTASGKS. 20–25 provides a ligand contact to substrate; it reads TASGKS. Interaction with substrate tRNA stretches follow at residues 43–46 and 167–171; these read DSMQ and QRIAR.

Belongs to the IPP transferase family. In terms of assembly, monomer. Mg(2+) serves as cofactor.

It catalyses the reaction adenosine(37) in tRNA + dimethylallyl diphosphate = N(6)-dimethylallyladenosine(37) in tRNA + diphosphate. Catalyzes the transfer of a dimethylallyl group onto the adenine at position 37 in tRNAs that read codons beginning with uridine, leading to the formation of N6-(dimethylallyl)adenosine (i(6)A). This chain is tRNA dimethylallyltransferase, found in Rhodospirillum rubrum (strain ATCC 11170 / ATH 1.1.1 / DSM 467 / LMG 4362 / NCIMB 8255 / S1).